Reading from the N-terminus, the 37-residue chain is Cytochrome b6-f complex subunit 5 (37 aa).

The helical transmembrane segment at 5-25 (LLCGIVLGLIPVTLAGLFFAA) threads the bilayer.

The protein belongs to the PetG family. As to quaternary structure, the 4 large subunits of the cytochrome b6-f complex are cytochrome b6, subunit IV (17 kDa polypeptide, PetD), cytochrome f and the Rieske protein, while the 4 small subunits are PetG, PetL, PetM and PetN. The complex functions as a dimer.

It is found in the cellular thylakoid membrane. In terms of biological role, component of the cytochrome b6-f complex, which mediates electron transfer between photosystem II (PSII) and photosystem I (PSI), cyclic electron flow around PSI, and state transitions. PetG is required for either the stability or assembly of the cytochrome b6-f complex. This chain is Cytochrome b6-f complex subunit 5, found in Thermosynechococcus vestitus (strain NIES-2133 / IAM M-273 / BP-1).